A 279-amino-acid polypeptide reads, in one-letter code: 4-diphosphocytidyl-2-C-methyl-D-erythritol kinase (279 aa).

Residue K9 is part of the active site. Residue 92–102 participates in ATP binding; it reads PLAAGLGGGSS. The active site involves D134.

The protein belongs to the GHMP kinase family. IspE subfamily.

It carries out the reaction 4-CDP-2-C-methyl-D-erythritol + ATP = 4-CDP-2-C-methyl-D-erythritol 2-phosphate + ADP + H(+). Its pathway is isoprenoid biosynthesis; isopentenyl diphosphate biosynthesis via DXP pathway; isopentenyl diphosphate from 1-deoxy-D-xylulose 5-phosphate: step 3/6. Its function is as follows. Catalyzes the phosphorylation of the position 2 hydroxy group of 4-diphosphocytidyl-2C-methyl-D-erythritol. This is 4-diphosphocytidyl-2-C-methyl-D-erythritol kinase from Syntrophus aciditrophicus (strain SB).